The following is a 171-amino-acid chain: 3-hydroxydecanoyl-[acyl-carrier-protein] dehydratase (171 aa).

Histidine 70 is an active-site residue.

The protein belongs to the thioester dehydratase family. FabA subfamily. In terms of assembly, homodimer.

Its subcellular location is the cytoplasm. The catalysed reaction is a (3R)-hydroxyacyl-[ACP] = a (2E)-enoyl-[ACP] + H2O. It carries out the reaction (3R)-hydroxydecanoyl-[ACP] = (2E)-decenoyl-[ACP] + H2O. The enzyme catalyses (2E)-decenoyl-[ACP] = (3Z)-decenoyl-[ACP]. Its pathway is lipid metabolism; fatty acid biosynthesis. Functionally, necessary for the introduction of cis unsaturation into fatty acids. Catalyzes the dehydration of (3R)-3-hydroxydecanoyl-ACP to E-(2)-decenoyl-ACP and then its isomerization to Z-(3)-decenoyl-ACP. Can catalyze the dehydratase reaction for beta-hydroxyacyl-ACPs with saturated chain lengths up to 16:0, being most active on intermediate chain length. The sequence is that of 3-hydroxydecanoyl-[acyl-carrier-protein] dehydratase from Pseudomonas syringae pv. tomato (strain ATCC BAA-871 / DC3000).